A 359-amino-acid chain; its full sequence is 4-hydroxy-3-methylbut-2-en-1-yl diphosphate synthase (flavodoxin) (359 aa).

Residues C263, C266, C298, and E305 each contribute to the [4Fe-4S] cluster site.

It belongs to the IspG family. It depends on [4Fe-4S] cluster as a cofactor.

It carries out the reaction (2E)-4-hydroxy-3-methylbut-2-enyl diphosphate + oxidized [flavodoxin] + H2O + 2 H(+) = 2-C-methyl-D-erythritol 2,4-cyclic diphosphate + reduced [flavodoxin]. It participates in isoprenoid biosynthesis; isopentenyl diphosphate biosynthesis via DXP pathway; isopentenyl diphosphate from 1-deoxy-D-xylulose 5-phosphate: step 5/6. Functionally, converts 2C-methyl-D-erythritol 2,4-cyclodiphosphate (ME-2,4cPP) into 1-hydroxy-2-methyl-2-(E)-butenyl 4-diphosphate. This is 4-hydroxy-3-methylbut-2-en-1-yl diphosphate synthase (flavodoxin) from Wolinella succinogenes (strain ATCC 29543 / DSM 1740 / CCUG 13145 / JCM 31913 / LMG 7466 / NCTC 11488 / FDC 602W) (Vibrio succinogenes).